A 468-amino-acid polypeptide reads, in one-letter code: Inositol polyphosphate 5-phosphatase K (468 aa).

A catalytic region spans residues 34-337 (VHVVTWNVAS…SDHKPVTGTF (304 aa)). The segment at 318–448 (NYVSHMAYSI…HSVVGISQPF (131 aa)) is required for interaction with GPR78 and PAK1. The segment at 340–468 (ELNPLMSVPL…DTLYEPEPQI (129 aa)) is required for ruffle localization.

This sequence belongs to the inositol 1,4,5-trisphosphate 5-phosphatase type II family. In terms of assembly, interacts with GPR78; necessary for INPP5K localization at the endoplasmic reticulum. Interacts with PAK1; competes with GPR78. As to expression, expressed in the skeletal muscle and the eye.

It is found in the endoplasmic reticulum. Its subcellular location is the cytoplasm. The enzyme catalyses 1D-myo-inositol 1,4,5-trisphosphate + H2O = 1D-myo-inositol 1,4-bisphosphate + phosphate. The catalysed reaction is 1,2-dioctanoyl-sn-glycero-3-phospho-(1D-myo-inositol-3,4,5-trisphosphate) + H2O = 1,2-dioctanoyl-sn-glycero-3-phospho-(1D-myo-inositol-3,4-bisphosphate) + phosphate. It catalyses the reaction 1D-myo-inositol 1,3,4,5-tetrakisphosphate + H2O = 1D-myo-inositol 1,3,4-trisphosphate + phosphate. It carries out the reaction a 1,2-diacyl-sn-glycero-3-phospho-(1D-myo-inositol-4,5-bisphosphate) + H2O = a 1,2-diacyl-sn-glycero-3-phospho-(1D-myo-inositol 4-phosphate) + phosphate. The enzyme catalyses a 1,2-diacyl-sn-glycero-3-phospho-(1D-myo-inositol-3,4,5-trisphosphate) + H2O = a 1,2-diacyl-sn-glycero-3-phospho-(1D-myo-inositol-3,4-bisphosphate) + phosphate. Functionally, inositol 5-phosphatase which acts on inositol 1,4,5-trisphosphate, inositol 1,3,4,5-tetrakisphosphate, phosphatidylinositol 4,5-bisphosphate and phosphatidylinositol 3,4,5-trisphosphate. Has 6-fold higher affinity for phosphatidylinositol 4,5-bisphosphate than for inositol 1,4,5-trisphosphate. Negatively regulates assembly of the actin cytoskeleton. Controls insulin-dependent glucose uptake among inositol 3,4,5-trisphosphate phosphatases; therefore, is the specific regulator for insulin signaling in skeletal muscle. This is Inositol polyphosphate 5-phosphatase K from Mus musculus (Mouse).